A 48-amino-acid polypeptide reads, in one-letter code: Delta-stichotoxin-Hcr1e (48 aa).

Disulfide bonds link C3/C43, C5/C33, and C26/C44.

Belongs to the sea anemone sodium channel inhibitory toxin family. Type II subfamily.

Its subcellular location is the secreted. The protein localises to the nematocyst. Functionally, binds to site 3 of voltage-gated sodium channels and inhibits the inactivation process. This chain is Delta-stichotoxin-Hcr1e, found in Radianthus crispa (Leathery sea anemone).